The following is a 133-amino-acid chain: DNA-binding protein inhibitor ID-2-A (133 aa).

In terms of domain architecture, bHLH spans alanine 23–leucine 75. The Nuclear export signal signature appears at leucine 106–leucine 115.

In terms of assembly, heterodimer with other HLH proteins. As to expression, in the embryo, expressed in a range of tissues, with primary expression in the developing pronephros; expressed in the pronephric anlage, and by the swimming tadpole stages expressed robustly in the pronephric tubules and weakly in the pronephric duct. Expressed in the secondary heart field. In the developing nervous system, expressed in the neural crest and in the neural folds during neurula stages, and at stage 20 in the neural tube, ventral mesoderm and mid-hindbrain boundary. By early tailbud stages, expressed in the neural tube, somites and branchial arches. In tadpoles (stage 37/38), expressed in the heart, eye, otic vesicle, somites and branchial arches. Also expressed in migrating muscle cells. Expressed at a low level in limbs, with expression decreasing as limbs develop, but expressed at a high level in blastemas (regenerated limbs), where expression is localized primarily to the blastemal epidermis. Widely expressed in adults with highest expression in the spleen, skin, intestine and brain, and at a much lower level in testis and heart.

It localises to the cytoplasm. Its subcellular location is the nucleus. Its function is as follows. Transcriptional regulator (lacking a basic DNA binding domain) which negatively regulates the basic helix-loop-helix (bHLH) transcription factors by forming heterodimers and inhibiting their DNA binding and transcriptional activity. Inhibits the activity of both neurogenic (neurod1/neuroD) and myogenic (myod1/myoD) bHLH factors. May play a role in the regulation of the circadian clock. This chain is DNA-binding protein inhibitor ID-2-A (id2-a), found in Xenopus laevis (African clawed frog).